Here is a 328-residue protein sequence, read N- to C-terminus: 4-hydroxythreonine-4-phosphate dehydrogenase (328 aa).

Substrate-binding residues include His134 and Thr135. Residues His164, His209, and His265 each contribute to the a divalent metal cation site. Substrate-binding residues include Lys273, Asn282, and Arg291.

It belongs to the PdxA family. In terms of assembly, homodimer. It depends on Zn(2+) as a cofactor. Mg(2+) serves as cofactor. The cofactor is Co(2+).

The protein resides in the cytoplasm. The enzyme catalyses 4-(phosphooxy)-L-threonine + NAD(+) = 3-amino-2-oxopropyl phosphate + CO2 + NADH. The protein operates within cofactor biosynthesis; pyridoxine 5'-phosphate biosynthesis; pyridoxine 5'-phosphate from D-erythrose 4-phosphate: step 4/5. Functionally, catalyzes the NAD(P)-dependent oxidation of 4-(phosphooxy)-L-threonine (HTP) into 2-amino-3-oxo-4-(phosphooxy)butyric acid which spontaneously decarboxylates to form 3-amino-2-oxopropyl phosphate (AHAP). The polypeptide is 4-hydroxythreonine-4-phosphate dehydrogenase (Vibrio vulnificus (strain CMCP6)).